Consider the following 1697-residue polypeptide: Neurexin-3a (1697 aa).

The N-terminal stretch at 1–23 is a signal peptide; the sequence is MNFFRFPVQLQLLISTVLGPCLG. The Laminin G-like 1 domain maps to 24–198; the sequence is LEFTGLQGQW…RVRMDIEGIC (175 aa). The Extracellular segment spans residues 24–1622; sequence LEFTGLQGQW…EVVRESSSTT (1599 aa). In terms of domain architecture, EGF-like 1 spans 194–231; that stretch reads IEGICMENPCENGGTCSVVDGEPLCDCSKTEYVGRFCN. Intrachain disulfides connect C198/C209, C203/C218, and C220/C230. Laminin G-like domains lie at 258–455 and 462–654; these read VATF…VFKC and DPIS…KPSC. D304, L321, and M389 together coordinate Ca(2+). 5 disulfide bridges follow: C419–C455, C625–C654, C662–C673, C667–C682, and C684–C694. In terms of domain architecture, EGF-like 2 spans 658-695; that stretch reads SGKQCDSYPCKNKGLCKEGWNRFICDCTGTGYWSRTCE. Laminin G-like domains are found at residues 700-872 and 886-1061; these read ILSY…IDFC and DPVT…ERGC. 4 disulfide bridges follow: C1033–C1061, C1077–C1088, C1082–C1097, and C1099–C1109. Positions 1073 to 1110 constitute an EGF-like 3 domain; sequence PSTTCQEDSCANMGICIQQWENYTCDCSMTSYTGTHCN. Residues 1114-1314 enclose the Laminin G-like 6 domain; the sequence is TTYIFGKGGG…NPNIKINGSV (201 aa). 3 disordered regions span residues 1345 to 1366, 1442 to 1479, and 1520 to 1557; these read TMSTTTTRKHRTPPTIQTTDDM, LSDGGSDDCGDDDDDDDDDGLMISGYGSGEAYDSNLPP, and PNKVFDSGRTTTASFSPKLSRSTTTSTPPKLPAGKMNH. Residues 1446–1461 show a composition bias toward acidic residues; it reads GSDDCGDDDDDDDDDG. Residues 1527 to 1547 show a composition bias toward polar residues; that stretch reads GRTTTASFSPKLSRSTTTSTP. A helical transmembrane segment spans residues 1623–1643; that stretch reads GMVVGIVAAAALCILILLYAM. At 1644–1697 the chain is on the cytoplasmic side; sequence YKYRNRDEGSYQVDETRNYITNSAQSNGAVMKDKQQSTKSGNKKQKNKDKEYYV. Residues 1665–1697 form a disordered region; the sequence is NSAQSNGAVMKDKQQSTKSGNKKQKNKDKEYYV.

This sequence belongs to the neurexin family.

The protein resides in the membrane. Its function is as follows. Neuronal cell surface protein that may be involved in cell recognition and cell adhesion. This Danio rerio (Zebrafish) protein is Neurexin-3a (nrxn3a).